A 271-amino-acid polypeptide reads, in one-letter code: Interleukin-1 alpha (271 aa).

Residues Met-1–Arg-112 constitute a propeptide that is removed on maturation. Lys-82 bears the N6-acetyllysine mark. The nuclear localization signal (NLS) stretch occupies residues Lys-82 to Leu-86. Position 87 is a phosphoserine (Ser-87). N-linked (GlcNAc...) asparagine glycosylation is found at Asn-102 and Asn-141.

It belongs to the IL-1 family. In terms of assembly, monomer. Interacts with TMED10; the interaction mediates the translocation from the cytoplasm into the ERGIC (endoplasmic reticulum-Golgi intermediate compartment) and thereby secretion. Interacts with IL1R1. Interacts with S100A13; this interaction is the first step in the export of IL1A, followed by direct translocation of this complex across the plasma membrane. Acetylated within its nuclear localization sequence, which impacts subcellular localization. Post-translationally, proteolytic processed by CAPN1 in a calcium-dependent manner. Cleavage from 31 kDa precursor to 18 kDa biologically active molecules. In terms of processing, phosphorylated. Phosphorylation greatly enhances susceptibility to digestion and promotes the conversion of pre-IL1A alpha to the biologically active IL1A.

The protein localises to the nucleus. It localises to the cytoplasm. Its subcellular location is the secreted. In terms of biological role, cytokine constitutively present intracellularly in nearly all resting non-hematopoietic cells that plays an important role in inflammation and bridges the innate and adaptive immune systems. After binding to its receptor IL1R1 together with its accessory protein IL1RAP, forms the high affinity interleukin-1 receptor complex. Signaling involves the recruitment of adapter molecules such as MYD88, IRAK1 or IRAK4. In turn, mediates the activation of NF-kappa-B and the three MAPK pathways p38, p42/p44 and JNK pathways. Within the cell, acts as an alarmin and cell death results in its liberation in the extracellular space after disruption of the cell membrane to induce inflammation and alert the host to injury or damage. In addition to its role as a danger signal, which occurs when the cytokine is passively released by cell necrosis, directly senses DNA damage and acts as signal for genotoxic stress without loss of cell integrity. In Cercocebus atys (Sooty mangabey), this protein is Interleukin-1 alpha (IL1A).